The chain runs to 92 residues: Small ribosomal subunit protein uS19c (92 aa).

Belongs to the universal ribosomal protein uS19 family.

Its subcellular location is the plastid. The protein resides in the chloroplast. In terms of biological role, protein S19 forms a complex with S13 that binds strongly to the 16S ribosomal RNA. This chain is Small ribosomal subunit protein uS19c, found in Daucus carota (Wild carrot).